Here is a 465-residue protein sequence, read N- to C-terminus: Ribulose bisphosphate carboxylase large chain (465 aa).

An N6,N6,N6-trimethyllysine modification is found at Lys4. Residues Asn113 and Thr163 each contribute to the substrate site. The active-site Proton acceptor is the Lys165. Residue Lys167 coordinates substrate. Mg(2+) contacts are provided by Lys191, Asp193, and Glu194. Residue Lys191 is modified to N6-carboxylysine. His284 functions as the Proton acceptor in the catalytic mechanism. Substrate-binding residues include Arg285, His317, and Ser369.

This sequence belongs to the RuBisCO large chain family. Type I subfamily. In terms of assembly, heterohexadecamer of 8 large chains and 8 small chains; disulfide-linked. The disulfide link is formed within the large subunit homodimers. The cofactor is Mg(2+). In terms of processing, the disulfide bond which can form in the large chain dimeric partners within the hexadecamer appears to be associated with oxidative stress and protein turnover.

It localises to the plastid. Its subcellular location is the chloroplast. The catalysed reaction is 2 (2R)-3-phosphoglycerate + 2 H(+) = D-ribulose 1,5-bisphosphate + CO2 + H2O. It carries out the reaction D-ribulose 1,5-bisphosphate + O2 = 2-phosphoglycolate + (2R)-3-phosphoglycerate + 2 H(+). In terms of biological role, ruBisCO catalyzes two reactions: the carboxylation of D-ribulose 1,5-bisphosphate, the primary event in carbon dioxide fixation, as well as the oxidative fragmentation of the pentose substrate in the photorespiration process. Both reactions occur simultaneously and in competition at the same active site. In Manilkara zapota (Sapodilla plum), this protein is Ribulose bisphosphate carboxylase large chain.